We begin with the raw amino-acid sequence, 266 residues long: Putative hydro-lyase VF_1377 (266 aa).

It belongs to the D-glutamate cyclase family.

This is Putative hydro-lyase VF_1377 from Aliivibrio fischeri (strain ATCC 700601 / ES114) (Vibrio fischeri).